A 268-amino-acid polypeptide reads, in one-letter code: GTP cyclohydrolase FolE2 (268 aa).

It belongs to the GTP cyclohydrolase IV family.

The enzyme catalyses GTP + H2O = 7,8-dihydroneopterin 3'-triphosphate + formate + H(+). It functions in the pathway cofactor biosynthesis; 7,8-dihydroneopterin triphosphate biosynthesis; 7,8-dihydroneopterin triphosphate from GTP: step 1/1. Its function is as follows. Converts GTP to 7,8-dihydroneopterin triphosphate. The sequence is that of GTP cyclohydrolase FolE2 from Janthinobacterium sp. (strain Marseille) (Minibacterium massiliensis).